The primary structure comprises 187 residues: Putative protein SSX8 (187 aa).

Disordered regions lie at residues 1 to 21 (MNGD…SEKR) and 109 to 187 (PKIM…EDDE). The 64-residue stretch at 20 to 83 (KRSKAFNDIA…KQATDFQGNY (64 aa)) folds into the KRAB-related domain. Position 123 is a phosphoserine (Ser123). Basic residues predominate over residues 152–168 (KRSGPKRGRHAWTHRLR).

The protein belongs to the SSX family. As to expression, not detected in any normal or tumor tissues.

Could act as a modulator of transcription. This chain is Putative protein SSX8, found in Homo sapiens (Human).